Here is a 118-residue protein sequence, read N- to C-terminus: ATP-dependent Clp protease adapter protein ClpS (118 aa).

The interval methionine 1–aspartate 24 is disordered.

The protein belongs to the ClpS family. Binds to the N-terminal domain of the chaperone ClpA.

In terms of biological role, involved in the modulation of the specificity of the ClpAP-mediated ATP-dependent protein degradation. This chain is ATP-dependent Clp protease adapter protein ClpS, found in Hyphomonas neptunium (strain ATCC 15444).